We begin with the raw amino-acid sequence, 443 residues long: Xaa-Pro dipeptidase (443 aa).

The Mn(2+) site is built by aspartate 246, aspartate 257, histidine 339, glutamate 384, and glutamate 423.

This sequence belongs to the peptidase M24B family. Bacterial-type prolidase subfamily. It depends on Mn(2+) as a cofactor.

The catalysed reaction is Xaa-L-Pro dipeptide + H2O = an L-alpha-amino acid + L-proline. Its function is as follows. Splits dipeptides with a prolyl residue in the C-terminal position. The chain is Xaa-Pro dipeptidase from Klebsiella pneumoniae subsp. pneumoniae (strain ATCC 700721 / MGH 78578).